A 130-amino-acid polypeptide reads, in one-letter code: Small ribosomal subunit protein uS11 (130 aa).

It belongs to the universal ribosomal protein uS11 family. Part of the 30S ribosomal subunit. Interacts with proteins S7 and S18. Binds to IF-3.

Functionally, located on the platform of the 30S subunit, it bridges several disparate RNA helices of the 16S rRNA. Forms part of the Shine-Dalgarno cleft in the 70S ribosome. This is Small ribosomal subunit protein uS11 from Campylobacter jejuni subsp. jejuni serotype O:6 (strain 81116 / NCTC 11828).